Consider the following 736-residue polypeptide: MAYIAVPAVVDSRSSEAIGLLESFGVDAGADANDVSYQDHDYVLDQLQYMLDGYEAGDVIDALVHKNWLHHSVYCLLPPKSQLLEYWKSNPSAIPDNVDRRLRKRLMLKKDLRKDDEYNQLARAFKISDVYAPLISSTTSPMTMIQNLNRGEIVYTTTDRVIGARILLYAPRKYYASTLSFTMTKCIIPFGKEVGRVPHSRFNVGTFPSIATPKCFVMSGVDIESIPNEFIKLFYQRVKSVHANILNDISPQIVSDMINRKRLRVHTPSDRRAAQLMHLPYHVKRGASHVDVYKVDVVDMLFEVVDVADGLRNVSRKLTMHTVPVCILEMLGIEIADYCIRQEDGMLTDWFLLLTMLSDGLTDRRTHCQYLMNPSSVPPDVILNISITGFINRHTIDVMPDIYDFVKPIGAVLPKGSFKSTIMRVLDSISILGIQIMPRAHVVDSDEVGEQMEPTFEQAVMEIYKGIAGVDSLDDLIKWVLNSDLIPHDDRLGQLFQAFLPLAKDLLAPMARKFYDNSMSEGRLLTFAHADSELLNANYFGHLLRLKIPYITEVNLMIRKNREGGELFQLVLSYLYKMYATSAQPKWFGSLLRLLICPWLHMEKLIGEADPASTSAEIGWHIPREQLMQDGWCGCEDGFIPYVSIRAPRLVIEELMEKNWGQYHAQVIVTDQLVVGEPRRVSAKAVIKGNHLPVKLVSRFACFTLTAKYEMRLSCGHSTGRGAAYSARLAFRSDLA.

It belongs to the orthoreovirus mu-2 protein family. Interacts with protein mu-NS; in viral inclusions. Interacts with polymerase lambda-3; this interaction stimulates the ATPase activity of mu-2. It depends on a divalent metal cation as a cofactor.

It localises to the virion. The protein resides in the host cytoplasm. Its subcellular location is the host cytoskeleton. Minor inner capsid (core) component. Displays NTPase and RNA 5'-triphosphatase (RTPase) activities. ATP is the preferred substrate for hydrolysis. May function as a cofactor of polymerase lambda-3. Associates with microtubules and plays a role in the formation, structural organization and morphology of viral inclusions, where the assembly of cores and the replication of viral RNA occur. Together with mu-NS, recruits the other core proteins to these inclusions. The protein is Microtubule-associated protein mu-2 (M1) of Mammalia (T3D).